Consider the following 217-residue polypeptide: MHRQSIVRLTRQCGGLPLVELPPPYLAPSLHFSLIRSPVQCSSFSSTAVAAGRERDLSKSRGVSAIHRTGPKFRLGVSKYPLPKPVSPDALEKRYPTPDHGLWGFFPKDKSALSTPEYDVAHGRSWSIQELREKSWDDLHSLWWVCVKERNRIATSNLERQRLKAGYGEWEANDRDKVIRVTQKSIKHVLRERWYAWEDAQRLYKNGYRPQDEDNQE.

The protein belongs to the universal ribosomal protein uL29 family. In terms of assembly, component of the mitochondrial large ribosomal subunit. Mature mitochondrial ribosomes consist of a small (37S) and a large (54S) subunit. The 37S subunit contains at least 33 different proteins and 1 molecule of RNA (15S). The 54S subunit contains at least 45 different proteins and 1 molecule of RNA (21S).

The protein localises to the mitochondrion. This chain is Large ribosomal subunit protein uL29m (mrpl4), found in Aspergillus clavatus (strain ATCC 1007 / CBS 513.65 / DSM 816 / NCTC 3887 / NRRL 1 / QM 1276 / 107).